The sequence spans 1094 residues: Carbamoyl phosphate synthase large chain (1094 aa).

A carboxyphosphate synthetic domain region spans residues 1 to 402 (MPRRSDLHRI…AFQKALRALE (402 aa)). ATP is bound by residues Arg129, Arg169, Gly175, Gly176, Arg208, Leu210, Glu215, Gly241, Val242, His243, Gln285, and Glu299. The ATP-grasp 1 domain maps to 133 to 328 (GEAMEKIGLR…IARIGAKLAV (196 aa)). 3 residues coordinate Mg(2+): Gln285, Glu299, and Asn301. Mn(2+) is bound by residues Gln285, Glu299, and Asn301. The segment at 403-552 (TGRSGWTIAE…YLYGNYDEES (150 aa)) is oligomerization domain. The tract at residues 553–936 (EAATEGRKKV…AFMKSQLAAD (384 aa)) is carbamoyl phosphate synthetic domain. The ATP-grasp 2 domain occupies 679–870 (EAIARELGIE…LPSVAARLML (192 aa)). Arg715, Arg754, Leu756, Glu761, Gly786, Ile787, His788, Ser789, Gln829, and Glu841 together coordinate ATP. The Mg(2+) site is built by Gln829, Glu841, and Asn843. Residues Gln829, Glu841, and Asn843 each coordinate Mn(2+). The region spanning 937–1077 (NALPREGTVF…QEWHEILRAP (141 aa)) is the MGS-like domain. The segment at 937 to 1094 (NALPREGTVF…AGSTQPAGVA (158 aa)) is allosteric domain.

Belongs to the CarB family. As to quaternary structure, composed of two chains; the small (or glutamine) chain promotes the hydrolysis of glutamine to ammonia, which is used by the large (or ammonia) chain to synthesize carbamoyl phosphate. Tetramer of heterodimers (alpha,beta)4. Mg(2+) serves as cofactor. Requires Mn(2+) as cofactor.

It carries out the reaction hydrogencarbonate + L-glutamine + 2 ATP + H2O = carbamoyl phosphate + L-glutamate + 2 ADP + phosphate + 2 H(+). The catalysed reaction is hydrogencarbonate + NH4(+) + 2 ATP = carbamoyl phosphate + 2 ADP + phosphate + 2 H(+). It participates in amino-acid biosynthesis; L-arginine biosynthesis; carbamoyl phosphate from bicarbonate: step 1/1. Its pathway is pyrimidine metabolism; UMP biosynthesis via de novo pathway; (S)-dihydroorotate from bicarbonate: step 1/3. Functionally, large subunit of the glutamine-dependent carbamoyl phosphate synthetase (CPSase). CPSase catalyzes the formation of carbamoyl phosphate from the ammonia moiety of glutamine, carbonate, and phosphate donated by ATP, constituting the first step of 2 biosynthetic pathways, one leading to arginine and/or urea and the other to pyrimidine nucleotides. The large subunit (synthetase) binds the substrates ammonia (free or transferred from glutamine from the small subunit), hydrogencarbonate and ATP and carries out an ATP-coupled ligase reaction, activating hydrogencarbonate by forming carboxy phosphate which reacts with ammonia to form carbamoyl phosphate. The polypeptide is Carbamoyl phosphate synthase large chain (Gemmatimonas aurantiaca (strain DSM 14586 / JCM 11422 / NBRC 100505 / T-27)).